The sequence spans 396 residues: S-arrestin (396 aa).

It belongs to the arrestin family.

Its function is as follows. Arrestin is one of the major proteins of the ros (retinal rod outer segments); it binds to photoactivated-phosphorylated rhodopsin, thereby apparently preventing the transducin-mediated activation of phosphodiesterase. This Aquarana catesbeiana (American bullfrog) protein is S-arrestin.